The primary structure comprises 215 residues: Ribonuclease T (215 aa).

One can recognise an Exonuclease domain in the interval 20–194 (VVIDVETAGF…YDTLQTAKLF (175 aa)). Mg(2+) is bound by residues Asp-23, Glu-25, His-181, and Asp-186. His-181 acts as the Proton donor/acceptor in catalysis.

This sequence belongs to the RNase T family. In terms of assembly, homodimer. Mg(2+) is required as a cofactor.

Functionally, trims short 3' overhangs of a variety of RNA species, leaving a one or two nucleotide 3' overhang. Responsible for the end-turnover of tRNA: specifically removes the terminal AMP residue from uncharged tRNA (tRNA-C-C-A). Also appears to be involved in tRNA biosynthesis. The protein is Ribonuclease T of Yersinia pestis.